Reading from the N-terminus, the 119-residue chain is Small polypeptide DEVIL 24 (119 aa).

Residues 83-114 (SFTSKCTSLMKQQHARLCIIRLCATMLLRSYT) form a required for DVL/RTFL small polypeptide activity region. The helical transmembrane segment at 96 to 113 (HARLCIIRLCATMLLRSY) threads the bilayer.

This sequence belongs to the DVL/RTFL small polypeptides family.

It localises to the cell membrane. Functionally, small polypeptide acting as a regulatory molecule which coordinates cellular responses required for differentiation, growth and development, probably by restricting polar cell proliferation in lateral organs and coordinating socket cell recruitment and differentiation at trichome sites. The polypeptide is Small polypeptide DEVIL 24 (Arabidopsis thaliana (Mouse-ear cress)).